The primary structure comprises 353 residues: MSCTGFWRKLASGEECGAAARLLGAVLAIPAALYGLVVRLRALAYARGLSTVRHLDRPVISVGNLTVGGTGKTPMVAYLARRLMARGKRVAVISRGYGGSLEGETRIVSDGRTIVLSAAEAGDEPVHLATSVPGLMTVIGTDRYTAGLLALEQLDPDVFILDDGYQHLRLHRDLNILLMDCNRPLGNGRTLPAGLLREPQTAVRRADLVVYTRCTGGKAPAVHGMIPSCRAGHALTGAALLPDGEVQPLAALRGLRGVACAGIAEPEGFFDALRREGLDIVAAIPFADHASYGEREVSTLREAAAGADYLITTGKDGVKLSAHLARLLPVYATVLEMRPLDPAPLEAALDKVL.

66 to 73 provides a ligand contact to ATP; it reads TVGGTGKT.

It belongs to the LpxK family.

It carries out the reaction a lipid A disaccharide + ATP = a lipid IVA + ADP + H(+). Its pathway is glycolipid biosynthesis; lipid IV(A) biosynthesis; lipid IV(A) from (3R)-3-hydroxytetradecanoyl-[acyl-carrier-protein] and UDP-N-acetyl-alpha-D-glucosamine: step 6/6. In terms of biological role, transfers the gamma-phosphate of ATP to the 4'-position of a tetraacyldisaccharide 1-phosphate intermediate (termed DS-1-P) to form tetraacyldisaccharide 1,4'-bis-phosphate (lipid IVA). The polypeptide is Tetraacyldisaccharide 4'-kinase (Geobacter sulfurreducens (strain ATCC 51573 / DSM 12127 / PCA)).